We begin with the raw amino-acid sequence, 344 residues long: Probable electron transfer flavoprotein subunit alpha, mitochondrial (344 aa).

Residue 284–312 (LYIAIGVSGAVQHLAGMKDSKVIVAINND) participates in FAD binding.

This sequence belongs to the ETF alpha-subunit/FixB family. As to quaternary structure, heterodimer of an alpha and a beta subunit. Requires FAD as cofactor.

It localises to the mitochondrion matrix. Functionally, the electron transfer flavoprotein serves as a specific electron acceptor for several dehydrogenases, including five acyl-CoA dehydrogenases, glutaryl-CoA and sarcosine dehydrogenase. It transfers the electrons to the main mitochondrial respiratory chain via ETF-ubiquinone oxidoreductase (ETF dehydrogenase). The protein is Probable electron transfer flavoprotein subunit alpha, mitochondrial (AIM45) of Saccharomyces cerevisiae (strain ATCC 204508 / S288c) (Baker's yeast).